The primary structure comprises 186 residues: Ribosome-recycling factor (186 aa).

The interval 135-164 (DGMDDLKKAEKDGEIGQDESRAQSERVQKM) is disordered.

Belongs to the RRF family.

It localises to the cytoplasm. Its function is as follows. Responsible for the release of ribosomes from messenger RNA at the termination of protein biosynthesis. May increase the efficiency of translation by recycling ribosomes from one round of translation to another. The chain is Ribosome-recycling factor from Sinorhizobium medicae (strain WSM419) (Ensifer medicae).